The following is a 120-amino-acid chain: Large ribosomal subunit protein uL18 (120 aa).

This sequence belongs to the universal ribosomal protein uL18 family. Part of the 50S ribosomal subunit; part of the 5S rRNA/L5/L18/L25 subcomplex. Contacts the 5S and 23S rRNAs.

This is one of the proteins that bind and probably mediate the attachment of the 5S RNA into the large ribosomal subunit, where it forms part of the central protuberance. The protein is Large ribosomal subunit protein uL18 of Geobacillus kaustophilus (strain HTA426).